Reading from the N-terminus, the 629-residue chain is MHFHERFDVIVVGGGHAGTEAALAAARMGSKTLLLTHNIDTLGQMSCNPAIGGIGKGHLVKEIDALGGAMAIATDYAGIQFRTLNSSKGPAVRATRAQADRALYRQKIQNILQNQPNLRIFQQAVDDLIVENHQVVGVVTQMGLAFESPAVVLTTGTFLSGKIHIGLENYSGGRAGDPPAIALANRLRELPIRVGRLKTGTPPRIDANTIDFSQMAEQKGDSPLPVMSFMGDVSHHPKQISCWITHTNEKTHEIIRGGLDRSPMYSGVIEGIGPRYCPSIEDKIHRFADKSSHQIFIEPEGLNTSEIYPNGISTSLPFDVQLNLVRSIKGMENAEIMRPGYAIEYDYFDPRDLKNSLETKAINGLFFAGQINGTTGYEEAGAQGLLAGMNASLQVQGKEAWCPRRDEAYLGVLVDDLSTLGTKEPYRMFTSRAEYRLLLREDNADIRLTAKGRELGLVDDARWAAFSEKLESIELELQRLRGQWVHPNSPLIHALNPHLNTPISREASFEELLRRPEMDYSKLMQIEGFGPGLEDPQAAEQVQIQVKYSGYIQRQQEEINKAVRNENTGLPLTLDYKEVPGLSNEVIAKLNNHKPETIGQASRISGITPAAISILLVHLKKRGLLRKSA.

13–18 (GGGHAG) contributes to the FAD binding site. 273-287 (GPRYCPSIEDKIHRF) contributes to the NAD(+) binding site.

Belongs to the MnmG family. Homodimer. Heterotetramer of two MnmE and two MnmG subunits. FAD serves as cofactor.

The protein resides in the cytoplasm. NAD-binding protein involved in the addition of a carboxymethylaminomethyl (cmnm) group at the wobble position (U34) of certain tRNAs, forming tRNA-cmnm(5)s(2)U34. The chain is tRNA uridine 5-carboxymethylaminomethyl modification enzyme MnmG from Shewanella baltica (strain OS195).